Here is a 235-residue protein sequence, read N- to C-terminus: Class B acid phosphatase (235 aa).

The signal sequence occupies residues 1–22 (MKNLLKLSAIAILAASAVSTFA). The active-site Nucleophile is aspartate 67. Residues aspartate 67 and aspartate 69 each contribute to the Mg(2+) site. Aspartate 69 acts as the Proton donor in catalysis. Substrate-binding positions include 135-136 (TG) and lysine 175. Residue aspartate 190 participates in Mg(2+) binding.

Belongs to the class B bacterial acid phosphatase family. Homotetramer. It depends on Mg(2+) as a cofactor.

The protein resides in the periplasm. It catalyses the reaction a phosphate monoester + H2O = an alcohol + phosphate. Functionally, dephosphorylates several organic phosphate monoesters. Also has a phosphotransferase activity catalyzing the transfer of low-energy phosphate groups from organic phosphate monoesters to free hydroxyl groups of various organic compounds. The chain is Class B acid phosphatase from Haemophilus parainfluenzae (strain T3T1).